Here is a 410-residue protein sequence, read N- to C-terminus: WD repeat and FYVE domain-containing protein 1 (410 aa).

6 WD repeats span residues 22–61 (GHQD…QYWP), 66–105 (TMAS…NKMN), 112–150 (AHQN…NMLG), 153–192 (FFSS…CSVI), 197–236 (GHEG…GRTL), and 240–279 (GHHD…EEAP). An FYVE-type zinc finger spans residues 281–352 (WLESDSCQKC…VCDSCYDSIK (72 aa)). Residues cysteine 287, cysteine 290, cysteine 314, cysteine 317, cysteine 322, cysteine 325, cysteine 344, and cysteine 347 each coordinate Zn(2+). Residues 364–403 (EGKHNISHMSMDIARGLMVTCGTDRVVKIWDMTPVVGCSL) form a WD 7 repeat. A Phosphoserine modification is found at serine 408.

In terms of assembly, binds PtdIns3P in vitro with high specificity over other phosphoinositides. Interacts (via WD repeat 2) with tyrosine-phosphorylated TLR3 (via TIR domain) in response to poly(I:C). Interacts with TLR4 in response to LPS. Interacts with TICAM1 in response to poly(I:C).

It localises to the early endosome. Positively regulates TLR3- and TLR4-mediated signaling pathways by bridging the interaction between TLR3 or TLR4 and TICAM1. Promotes TLR3/4 ligand-induced activation of transcription factors IRF3 and NF-kappa-B, as well as the production of IFN-beta and inflammatory cytokines. This Mus musculus (Mouse) protein is WD repeat and FYVE domain-containing protein 1 (Wdfy1).